Consider the following 326-residue polypeptide: WRKY transcription factor 8 (326 aa).

The tract at residues valine 115–serine 172 is disordered. Composition is skewed to basic and acidic residues over residues glutamate 125–serine 153 and lysine 161–arginine 170. The WRKY DNA-binding region spans threonine 177–proline 242.

The protein belongs to the WRKY group II-c family. In terms of assembly, interacts with VQ9 (via N-terminus). Highly expressed in roots and at lower levels in rosette leaves, cauline leaves, stems, flowers and siliques.

The protein resides in the nucleus. Functionally, transcription factor. Interacts specifically with the W box (5'-TTGAC[CT]-3'), a frequently occurring stress-responsive cis-acting element. Functions as a positive regulator of salt stress response. Binds the W box of LTI78/RD29A stress-response gene and directly regulates its transcription under salt stress. Functions antagonistically with VQ9 to regulate sodium and potassium homeostasis under salt stress by regulating the expression of downstream SOS (SALT OVERLY SENSITIVE) stress-responsive genes. The DNA-binding activity of WRKY8 is decreased by VQ9. Functions as a negative regulator of basal resistance to the bacterial pathogen P.syringae and as positive regulator of resistance to the fungal pathogen to B.cinerea. Functions as a positive regulator of defense response againt tobamovirus (TMV) by regulating both the abscisic acid and ethylene signaling pathways. Positively regulates ABI4 expression and negatively modulates ACS6 and ERF104 expression by directly binding to the W box consensus motifs within their promoters. In Arabidopsis thaliana (Mouse-ear cress), this protein is WRKY transcription factor 8 (WRKY8).